The sequence spans 104 residues: Iron-sulfur cluster assembly protein CyaY (104 aa).

This sequence belongs to the frataxin family.

Functionally, involved in iron-sulfur (Fe-S) cluster assembly. May act as a regulator of Fe-S biogenesis. The chain is Iron-sulfur cluster assembly protein CyaY from Vibrio parahaemolyticus serotype O3:K6 (strain RIMD 2210633).